The sequence spans 239 residues: Ribonuclease PH (239 aa).

Phosphate contacts are provided by residues R86 and 124-126 (GTR).

This sequence belongs to the RNase PH family. Homohexameric ring arranged as a trimer of dimers.

The enzyme catalyses tRNA(n+1) + phosphate = tRNA(n) + a ribonucleoside 5'-diphosphate. In terms of biological role, phosphorolytic 3'-5' exoribonuclease that plays an important role in tRNA 3'-end maturation. Removes nucleotide residues following the 3'-CCA terminus of tRNAs; can also add nucleotides to the ends of RNA molecules by using nucleoside diphosphates as substrates, but this may not be physiologically important. Probably plays a role in initiation of 16S rRNA degradation (leading to ribosome degradation) during starvation. This Anaeromyxobacter dehalogenans (strain 2CP-C) protein is Ribonuclease PH.